Reading from the N-terminus, the 550-residue chain is Aspartate--tRNA ligase (550 aa).

Glu162 is an L-aspartate binding site. The interval 186-189 is aspartate; the sequence is QIYK. Arg208 serves as a coordination point for L-aspartate. ATP-binding positions include 208–210 and Gln217; that span reads RDE. Residue His417 participates in L-aspartate binding. Glu451 contributes to the ATP binding site. Arg458 is a binding site for L-aspartate. 499–502 contacts ATP; the sequence is GIDR.

It belongs to the class-II aminoacyl-tRNA synthetase family. Type 1 subfamily. As to quaternary structure, homodimer.

The protein localises to the cytoplasm. The enzyme catalyses tRNA(Asp) + L-aspartate + ATP = L-aspartyl-tRNA(Asp) + AMP + diphosphate. Its function is as follows. Catalyzes the attachment of L-aspartate to tRNA(Asp) in a two-step reaction: L-aspartate is first activated by ATP to form Asp-AMP and then transferred to the acceptor end of tRNA(Asp). In Mycoplasma genitalium (strain ATCC 33530 / DSM 19775 / NCTC 10195 / G37) (Mycoplasmoides genitalium), this protein is Aspartate--tRNA ligase.